The following is a 418-amino-acid chain: tRNA-2-methylthio-N(6)-dimethylallyladenosine synthase (418 aa).

Residues 1–118 (MNYLIETIGC…ALKIMNLFRT (118 aa)) form the MTTase N-terminal domain. The [4Fe-4S] cluster site is built by cysteine 10, cysteine 46, cysteine 80, cysteine 143, cysteine 147, and cysteine 150. The Radical SAM core domain maps to 129-356 (IKSKIVRYIT…LKESNKISIE (228 aa)). The TRAM domain maps to 359–418 (SEMLGSTQQVLAEEIKNGIIKARTKNGRKVFAEGRKEYIGKHINVNIKEAKINSLFGDIV).

Belongs to the methylthiotransferase family. MiaB subfamily. Monomer. It depends on [4Fe-4S] cluster as a cofactor.

It localises to the cytoplasm. The catalysed reaction is N(6)-dimethylallyladenosine(37) in tRNA + (sulfur carrier)-SH + AH2 + 2 S-adenosyl-L-methionine = 2-methylsulfanyl-N(6)-dimethylallyladenosine(37) in tRNA + (sulfur carrier)-H + 5'-deoxyadenosine + L-methionine + A + S-adenosyl-L-homocysteine + 2 H(+). Its function is as follows. Catalyzes the methylthiolation of N6-(dimethylallyl)adenosine (i(6)A), leading to the formation of 2-methylthio-N6-(dimethylallyl)adenosine (ms(2)i(6)A) at position 37 in tRNAs that read codons beginning with uridine. In Endomicrobium trichonymphae, this protein is tRNA-2-methylthio-N(6)-dimethylallyladenosine synthase.